Reading from the N-terminus, the 162-residue chain is Lymphocyte antigen 86 (162 aa).

An N-terminal signal peptide occupies residues 1–19 (MNGVAAALLVWILTSPSSS). Intrachain disulfides connect Cys33–Cys58, Cys45–Cys154, and Cys102–Cys112. The N-linked (GlcNAc...) asparagine glycan is linked to Asn96. Asn156 carries an N-linked (GlcNAc...) asparagine glycan.

M-shaped tetramer of two CD180-LY86 heterodimers. In terms of tissue distribution, highly expressed in spleen, liver, brain and thymus, and at lower levels in kidney.

The protein resides in the secreted. It localises to the extracellular space. Its function is as follows. May cooperate with CD180 and TLR4 to mediate the innate immune response to bacterial lipopolysaccharide (LPS) and cytokine production. Important for efficient CD180 cell surface expression. This Mus musculus (Mouse) protein is Lymphocyte antigen 86 (Ly86).